A 208-amino-acid polypeptide reads, in one-letter code: Uracil phosphoribosyltransferase (208 aa).

Residues Arg-78, Arg-103, and 130 to 138 (DPMFATGGT) each bind 5-phospho-alpha-D-ribose 1-diphosphate. Uracil is bound by residues Ile-193 and 198–200 (GDA). Asp-199 lines the 5-phospho-alpha-D-ribose 1-diphosphate pocket.

This sequence belongs to the UPRTase family. It depends on Mg(2+) as a cofactor.

The catalysed reaction is UMP + diphosphate = 5-phospho-alpha-D-ribose 1-diphosphate + uracil. It participates in pyrimidine metabolism; UMP biosynthesis via salvage pathway; UMP from uracil: step 1/1. Allosterically activated by GTP. Its function is as follows. Catalyzes the conversion of uracil and 5-phospho-alpha-D-ribose 1-diphosphate (PRPP) to UMP and diphosphate. In Campylobacter jejuni subsp. jejuni serotype O:2 (strain ATCC 700819 / NCTC 11168), this protein is Uracil phosphoribosyltransferase.